A 160-amino-acid chain; its full sequence is 3-dehydroquinate dehydratase (160 aa).

The active-site Proton acceptor is the tyrosine 22. 3 residues coordinate substrate: asparagine 73, histidine 79, and aspartate 86. Histidine 99 (proton donor) is an active-site residue. Substrate is bound by residues 100–101 and arginine 110; that span reads IS.

The protein belongs to the type-II 3-dehydroquinase family. In terms of assembly, homododecamer.

The catalysed reaction is 3-dehydroquinate = 3-dehydroshikimate + H2O. It participates in metabolic intermediate biosynthesis; chorismate biosynthesis; chorismate from D-erythrose 4-phosphate and phosphoenolpyruvate: step 3/7. Catalyzes a trans-dehydration via an enolate intermediate. This is 3-dehydroquinate dehydratase from Campylobacter lari (strain RM2100 / D67 / ATCC BAA-1060).